The sequence spans 598 residues: DNA mismatch repair protein MutL (598 aa).

Belongs to the DNA mismatch repair MutL/HexB family.

Its function is as follows. This protein is involved in the repair of mismatches in DNA. It is required for dam-dependent methyl-directed DNA mismatch repair. May act as a 'molecular matchmaker', a protein that promotes the formation of a stable complex between two or more DNA-binding proteins in an ATP-dependent manner without itself being part of a final effector complex. This Geotalea daltonii (strain DSM 22248 / JCM 15807 / FRC-32) (Geobacter daltonii) protein is DNA mismatch repair protein MutL.